The following is a 123-amino-acid chain: MRKPQRGYARQDRVKEQIMRELAELVRTGLKDPRAGFITINEVEVTRDYSHATVFYTVLNQDTREITEEVLEHARGHLRSELSKRIKLFKIPELHFKYDESLERGMSLSALIDQVAAEKPVED.

It belongs to the RbfA family. In terms of assembly, monomer. Binds 30S ribosomal subunits, but not 50S ribosomal subunits or 70S ribosomes.

The protein localises to the cytoplasm. In terms of biological role, one of several proteins that assist in the late maturation steps of the functional core of the 30S ribosomal subunit. Associates with free 30S ribosomal subunits (but not with 30S subunits that are part of 70S ribosomes or polysomes). Required for efficient processing of 16S rRNA. May interact with the 5'-terminal helix region of 16S rRNA. The sequence is that of Ribosome-binding factor A from Neisseria gonorrhoeae (strain NCCP11945).